Consider the following 324-residue polypeptide: Zinc finger C2HC domain-containing protein 1A (324 aa).

The segment at 15-44 (DLLPCKICGRTFFPLALKKHGPICQKTATK) adopts a C2HC/C3H-type 1 zinc-finger fold. The Zn(2+) site is built by cysteine 19, cysteine 22, histidine 34, and cysteine 38. The interval 43–83 (TKKRKTFDSSRQRAEGTDIPTVKPLKPRPEPPKKPSNWRRK) is disordered. The span at 48–58 (TFDSSRQRAEG) shows a compositional bias: basic and acidic residues. The C2HC/C3H-type 2 zinc finger occupies 118–147 (DYIQCPYCQRRFNENAADRHINFCKEQAAR). Positions 122, 125, 137, and 141 each coordinate Zn(2+). A disordered region spans residues 149 to 225 (SNKGKFSTDS…NKPQTLSPSH (77 aa)). Residues 176–187 (SNPPGIPSSGSS) are compositionally biased toward low complexity. Composition is skewed to polar residues over residues 188 to 198 (RLPQPSTTSKT) and 206 to 223 (KASS…TLSP). A Phosphoserine modification is found at serine 222. Threonine 243 carries the post-translational modification Phosphothreonine. At serine 291 the chain carries Phosphoserine.

It belongs to the ZC2HC1 family. The cofactor is Zn(2+).

This chain is Zinc finger C2HC domain-containing protein 1A (Zc2hc1a), found in Mus musculus (Mouse).